A 485-amino-acid chain; its full sequence is UDP-N-acetylmuramoyl-L-alanyl-D-glutamate--2,6-diaminopimelate ligase (485 aa).

Residue Ser-30 participates in UDP-N-acetyl-alpha-D-muramoyl-L-alanyl-D-glutamate binding. Residue 111–117 coordinates ATP; sequence GTNGKTT. Residues 153–154, Ser-180, Gln-186, and Arg-188 contribute to the UDP-N-acetyl-alpha-D-muramoyl-L-alanyl-D-glutamate site; that span reads TT. Lys-220 carries the N6-carboxylysine modification. Meso-2,6-diaminopimelate is bound by residues Arg-378, 402–405, Gly-455, and Glu-459; that span reads DNPR. A Meso-diaminopimelate recognition motif motif is present at residues 402–405; the sequence is DNPR.

The protein belongs to the MurCDEF family. MurE subfamily. Mg(2+) serves as cofactor. Post-translationally, carboxylation is probably crucial for Mg(2+) binding and, consequently, for the gamma-phosphate positioning of ATP.

It is found in the cytoplasm. It carries out the reaction UDP-N-acetyl-alpha-D-muramoyl-L-alanyl-D-glutamate + meso-2,6-diaminopimelate + ATP = UDP-N-acetyl-alpha-D-muramoyl-L-alanyl-gamma-D-glutamyl-meso-2,6-diaminopimelate + ADP + phosphate + H(+). The protein operates within cell wall biogenesis; peptidoglycan biosynthesis. Functionally, catalyzes the addition of meso-diaminopimelic acid to the nucleotide precursor UDP-N-acetylmuramoyl-L-alanyl-D-glutamate (UMAG) in the biosynthesis of bacterial cell-wall peptidoglycan. The sequence is that of UDP-N-acetylmuramoyl-L-alanyl-D-glutamate--2,6-diaminopimelate ligase from Bacteroides fragilis (strain ATCC 25285 / DSM 2151 / CCUG 4856 / JCM 11019 / LMG 10263 / NCTC 9343 / Onslow / VPI 2553 / EN-2).